The sequence spans 151 residues: Acidic phospholipase A2 5 (151 aa).

The first 27 residues, 1–27, serve as a signal peptide directing secretion; that stretch reads MYPAHLLVLLAVCVSLLGAASIPARPL. Disulfide bonds link Cys38/Cys104, Cys54/Cys151, Cys56/Cys72, Cys71/Cys132, Cys78/Cys125, Cys88/Cys118, and Cys111/Cys123. The Ca(2+) site is built by Tyr55, Gly57, and Gly59. Residue His75 is part of the active site. Residue Asp76 participates in Ca(2+) binding. Residue Asp126 is part of the active site.

This sequence belongs to the phospholipase A2 family. Group I subfamily. D49 sub-subfamily. Requires Ca(2+) as cofactor. As to expression, expressed by the venom gland.

The protein resides in the secreted. It carries out the reaction a 1,2-diacyl-sn-glycero-3-phosphocholine + H2O = a 1-acyl-sn-glycero-3-phosphocholine + a fatty acid + H(+). In terms of biological role, PLA2 catalyzes the calcium-dependent hydrolysis of the 2-acyl groups in 3-sn-phosphoglycerides. The sequence is that of Acidic phospholipase A2 5 from Tropidechis carinatus (Australian rough-scaled snake).